The primary structure comprises 465 residues: Na(+)-translocating NADH-quinone reductase subunit A (465 aa).

This sequence belongs to the NqrA family. In terms of assembly, composed of six subunits; NqrA, NqrB, NqrC, NqrD, NqrE and NqrF.

The catalysed reaction is a ubiquinone + n Na(+)(in) + NADH + H(+) = a ubiquinol + n Na(+)(out) + NAD(+). NQR complex catalyzes the reduction of ubiquinone-1 to ubiquinol by two successive reactions, coupled with the transport of Na(+) ions from the cytoplasm to the periplasm. NqrA to NqrE are probably involved in the second step, the conversion of ubisemiquinone to ubiquinol. In Chlamydia muridarum (strain MoPn / Nigg), this protein is Na(+)-translocating NADH-quinone reductase subunit A.